Here is a 126-residue protein sequence, read N- to C-terminus: Fluoride-specific ion channel FluC (126 aa).

The next 4 membrane-spanning stretches (helical) occupy residues 4–24, 35–55, 71–91, and 104–124; these read FMLL…RYLI, GFPY…GVLM, IIGL…MDNV, and LNIL…FQLM. The Na(+) site is built by Gly78 and Thr81.

This sequence belongs to the fluoride channel Fluc/FEX (TC 1.A.43) family.

The protein localises to the cell inner membrane. It carries out the reaction fluoride(in) = fluoride(out). With respect to regulation, na(+) is not transported, but it plays an essential structural role and its presence is essential for fluoride channel function. In terms of biological role, fluoride-specific ion channel. Important for reducing fluoride concentration in the cell, thus reducing its toxicity. The sequence is that of Fluoride-specific ion channel FluC from Aliivibrio salmonicida (strain LFI1238) (Vibrio salmonicida (strain LFI1238)).